Consider the following 558-residue polypeptide: Dihydroxy-acid dehydratase (558 aa).

Aspartate 78 serves as a coordination point for Mg(2+). Cysteine 119 contributes to the [2Fe-2S] cluster binding site. Mg(2+)-binding residues include aspartate 120 and lysine 121. The residue at position 121 (lysine 121) is an N6-carboxylysine. Cysteine 192 contacts [2Fe-2S] cluster. Glutamate 446 is a Mg(2+) binding site. The active-site Proton acceptor is serine 472.

It belongs to the IlvD/Edd family. In terms of assembly, homodimer. [2Fe-2S] cluster serves as cofactor. It depends on Mg(2+) as a cofactor.

The enzyme catalyses (2R)-2,3-dihydroxy-3-methylbutanoate = 3-methyl-2-oxobutanoate + H2O. It carries out the reaction (2R,3R)-2,3-dihydroxy-3-methylpentanoate = (S)-3-methyl-2-oxopentanoate + H2O. Its pathway is amino-acid biosynthesis; L-isoleucine biosynthesis; L-isoleucine from 2-oxobutanoate: step 3/4. The protein operates within amino-acid biosynthesis; L-valine biosynthesis; L-valine from pyruvate: step 3/4. In terms of biological role, functions in the biosynthesis of branched-chain amino acids. Catalyzes the dehydration of (2R,3R)-2,3-dihydroxy-3-methylpentanoate (2,3-dihydroxy-3-methylvalerate) into 2-oxo-3-methylpentanoate (2-oxo-3-methylvalerate) and of (2R)-2,3-dihydroxy-3-methylbutanoate (2,3-dihydroxyisovalerate) into 2-oxo-3-methylbutanoate (2-oxoisovalerate), the penultimate precursor to L-isoleucine and L-valine, respectively. The sequence is that of Dihydroxy-acid dehydratase from Campylobacter jejuni subsp. jejuni serotype O:2 (strain ATCC 700819 / NCTC 11168).